A 173-amino-acid chain; its full sequence is Crossover junction endodeoxyribonuclease RuvC (173 aa).

Residues D8, E67, and D139 contribute to the active site. D8, E67, and D139 together coordinate Mg(2+).

The protein belongs to the RuvC family. Homodimer which binds Holliday junction (HJ) DNA. The HJ becomes 2-fold symmetrical on binding to RuvC with unstacked arms; it has a different conformation from HJ DNA in complex with RuvA. In the full resolvosome a probable DNA-RuvA(4)-RuvB(12)-RuvC(2) complex forms which resolves the HJ. Requires Mg(2+) as cofactor.

The protein resides in the cytoplasm. The catalysed reaction is Endonucleolytic cleavage at a junction such as a reciprocal single-stranded crossover between two homologous DNA duplexes (Holliday junction).. Functionally, the RuvA-RuvB-RuvC complex processes Holliday junction (HJ) DNA during genetic recombination and DNA repair. Endonuclease that resolves HJ intermediates. Cleaves cruciform DNA by making single-stranded nicks across the HJ at symmetrical positions within the homologous arms, yielding a 5'-phosphate and a 3'-hydroxyl group; requires a central core of homology in the junction. The consensus cleavage sequence is 5'-(A/T)TT(C/G)-3'. Cleavage occurs on the 3'-side of the TT dinucleotide at the point of strand exchange. HJ branch migration catalyzed by RuvA-RuvB allows RuvC to scan DNA until it finds its consensus sequence, where it cleaves and resolves the cruciform DNA. The polypeptide is Crossover junction endodeoxyribonuclease RuvC (Erwinia tasmaniensis (strain DSM 17950 / CFBP 7177 / CIP 109463 / NCPPB 4357 / Et1/99)).